A 790-amino-acid polypeptide reads, in one-letter code: Probable copper-transporting ATPase SynA (790 aa).

Residues 1–105 (MPAAIVHSAD…IPPLQQQRLQ (105 aa)) are Cytoplasmic-facing. Positions 14-81 (TSILVEVEGM…EITGLGFRAQ (68 aa)) constitute an HMA domain. Cu cation is bound by residues C25 and C28. The chain crosses the membrane as a helical span at residues 106–125 (LAIAAFLLIVSSWGHLGHWL). Residues 126 to 134 (DHPLPGTDQ) are Extracellular-facing. The chain crosses the membrane as a helical span at residues 135-154 (LWFHALLAIWALLGPGRSIL). Topologically, residues 155-166 (QAGWQGLRCGAP) are cytoplasmic. Residues 167–189 (NMNSLVLLGTGSAYLASLVALLW) form a helical membrane-spanning segment. Residues 190–193 (PQLG) lie on the Extracellular side of the membrane. Residues 194–211 (WVCFLDEPVMLLGFILLG) form a helical membrane-spanning segment. The Cytoplasmic portion of the chain corresponds to 212 to 357 (RTLEEQARFR…RKAPVQRFAD (146 aa)). The chain crosses the membrane as a helical span at residues 358–380 (AIAGRFVYGVCAIAALTFGFWAT). Over 381–416 (LGSRWWPQVLQQPLPGLLIHAPHHGMEMAHPHSHSP) the chain is Extracellular. A helical transmembrane segment spans residues 417–439 (LLLALTLAISVLVVACPCALGLA). Over 440–726 (TPTAILVATG…QMGLRTIRQN (287 aa)) the chain is Cytoplasmic. D476 acts as the 4-aspartylphosphate intermediate in catalysis. Mg(2+) is bound by residues D669 and D673. Residues 727-749 (LTWALGYNVVMLPLAAGAFLPAY) traverse the membrane as a helical segment. The Extracellular segment spans residues 750 to 753 (GLAL). A helical membrane pass occupies residues 754–776 (TPAIAGACMAVSSLAVVSNSLLL). Residues 777-790 (RYWFRRSLNHSVSV) are Cytoplasmic-facing.

It belongs to the cation transport ATPase (P-type) (TC 3.A.3) family. Type IB subfamily.

It is found in the cell membrane. The catalysed reaction is Cu(2+)(in) + ATP + H2O = Cu(2+)(out) + ADP + phosphate + H(+). Functionally, involved in copper transport. In Synechococcus sp. (strain ATCC 27144 / PCC 6301 / SAUG 1402/1) (Anacystis nidulans), this protein is Probable copper-transporting ATPase SynA (synA).